The chain runs to 815 residues: Probable AMP deaminase (815 aa).

Residues 5–27 (YALHLAVATLLGASFAAASAYYM) traverse the membrane as a helical segment. Disordered regions lie at residues 53 to 116 (LLDA…PVPT) and 144 to 173 (LLTN…STNM). Positions 105–116 (VRPTTPRSPVPT) are enriched in low complexity. The segment covering 159–173 (ASQNGDTKPVPSTNM) has biased composition (polar residues). Zn(2+) is bound by residues His367 and His369. Residues His369 and 438–443 (KFNLKY) each bind substrate. His635 contributes to the Zn(2+) binding site. Position 638 (Glu638) interacts with substrate. Catalysis depends on His657, which acts as the Proton acceptor. Asp712 contacts Zn(2+). Residue 713-716 (DPLQ) coordinates substrate.

This sequence belongs to the metallo-dependent hydrolases superfamily. Adenosine and AMP deaminases family. In terms of assembly, homodimer. Requires Zn(2+) as cofactor.

It is found in the membrane. The catalysed reaction is AMP + H2O + H(+) = IMP + NH4(+). It functions in the pathway purine metabolism; IMP biosynthesis via salvage pathway; IMP from AMP: step 1/1. In terms of biological role, AMP deaminase plays a critical role in energy metabolism. The sequence is that of Probable AMP deaminase (AMPD) from Oryza sativa subsp. japonica (Rice).